Here is a 352-residue protein sequence, read N- to C-terminus: Phosphate acyltransferase (352 aa).

The segment covering 328–339 (ESFPGDAREREG) has biased composition (basic and acidic residues). A disordered region spans residues 328–352 (ESFPGDAREREGAPAPDAGTERVAS).

The protein belongs to the PlsX family. As to quaternary structure, homodimer. Probably interacts with PlsY.

It is found in the cytoplasm. The enzyme catalyses a fatty acyl-[ACP] + phosphate = an acyl phosphate + holo-[ACP]. It functions in the pathway lipid metabolism; phospholipid metabolism. Catalyzes the reversible formation of acyl-phosphate (acyl-PO(4)) from acyl-[acyl-carrier-protein] (acyl-ACP). This enzyme utilizes acyl-ACP as fatty acyl donor, but not acyl-CoA. This Citrifermentans bemidjiense (strain ATCC BAA-1014 / DSM 16622 / JCM 12645 / Bem) (Geobacter bemidjiensis) protein is Phosphate acyltransferase.